The following is a 358-amino-acid chain: MGIKRLSKLIKTYCSEGVQNRELKYYSGYKIAIDASMCIYQFLVAVRAEGQSLSWGDSTTSHISGIFYRSIRWIENGIIPVFVFDGIPPEEKIHEFEKRTKRRQDINAKLQDAIEQQDQVLVSKYDRMNVKMEKSHIEECQKTLRLLNIPYVIAPSEAEAYCAWLCKSKFVDAVATEDMDSLCFGSPLLLRNFNTALSQKLPVEEYNLHKILEGLQFTMEQFVDLCILLGCDYSATIRGVGMKRAFEYIKKYKSIDNLIGIVDFPDDFKYKEARTIFFTLGTDTSNNFTNENPINTNIATWDLIAVDSASINIEAVIDFLCNEKGFDKGRIETGIKKLQKQKKVNKQTRIDSFFKKKL.

The N-domain stretch occupies residues Met1–Arg103. Asp34 serves as a coordination point for Mg(2+). Positions 47 and 69 each coordinate DNA. Mg(2+) is bound by residues Asp85, Glu157, Glu159, Asp178, and Asp180. The I-domain stretch occupies residues Leu121–Tyr252. Residue Glu157 participates in DNA binding. DNA-binding residues include Gly230 and Asp232. Asp232 contributes to the Mg(2+) binding site. The interval Lys346–Phe354 is interaction with PCNA.

This sequence belongs to the XPG/RAD2 endonuclease family. FEN1 subfamily. Interacts with PCNA. Three molecules of FEN1 bind to one PCNA trimer with each molecule binding to one PCNA monomer. PCNA stimulates the nuclease activity without altering cleavage specificity. Requires Mg(2+) as cofactor. In terms of processing, phosphorylated. Phosphorylation upon DNA damage induces relocalization to the nuclear plasma.

The protein resides in the nucleus. It is found in the nucleolus. Its subcellular location is the nucleoplasm. The protein localises to the mitochondrion. Functionally, structure-specific nuclease with 5'-flap endonuclease and 5'-3' exonuclease activities involved in DNA replication and repair. During DNA replication, cleaves the 5'-overhanging flap structure that is generated by displacement synthesis when DNA polymerase encounters the 5'-end of a downstream Okazaki fragment. It enters the flap from the 5'-end and then tracks to cleave the flap base, leaving a nick for ligation. Also involved in the long patch base excision repair (LP-BER) pathway, by cleaving within the apurinic/apyrimidinic (AP) site-terminated flap. Acts as a genome stabilization factor that prevents flaps from equilibrating into structures that lead to duplications and deletions. Also possesses 5'-3' exonuclease activity on nicked or gapped double-stranded DNA, and exhibits RNase H activity. Also involved in replication and repair of rDNA and in repairing mitochondrial DNA. This Enterocytozoon bieneusi (strain H348) (Microsporidian parasite) protein is Flap endonuclease 1.